A 136-amino-acid chain; its full sequence is HetP-like commitment protein Alr2902 (136 aa).

A compositionally biased stretch (polar residues) spans 94–109; the sequence is KASTQDLNQSNNSDYL. The disordered stretch occupies residues 94–120; sequence KASTQDLNQSNNSDYLTTPEPDKRGNI.

Belongs to the HetP family. As to quaternary structure, in bacterial two-hybrid assays interacts robustly with HetR and Alr3234 and weakly with itself, HetP and Asl1930.

In terms of biological role, delays heterocyst differentiation and commitment when nitrogen is limiting. Interplay between the 4 HetP paralogs controls the timing of commitment to heterocyst formation and its duration. Epistatic analysis show that the 3 paralogs act upstream of hetP to delay commitment (asl1930, alr3234) or inhibit development (alr2902). Asl1930 and Alr3234 must also attenuate the activity of Alr2902. When only this homolog is present no heterocysts are formed, showing it inhibits development. Ectopic expression partially complements a hetP deletion. The sequence is that of HetP-like commitment protein Alr2902 from Nostoc sp. (strain PCC 7120 / SAG 25.82 / UTEX 2576).